The following is a 612-amino-acid chain: RNA-binding protein MRN1 (612 aa).

Residues 1–28 (MVVSYNNNNNNNNNNNNNNISNNNNNNN) show a composition bias toward low complexity. Disordered stretches follow at residues 1–57 (MVVS…TYAS) and 105–125 (PTQF…SQEQ). Composition is skewed to polar residues over residues 42-57 (YQQS…TYAS) and 115-125 (DSQQQRFSQEQ). RRM domains follow at residues 201–274 (RTVY…WGKP), 292–379 (RNVY…KTQQ), 431–504 (RTVY…WGKH), and 522–602 (RNVY…FGKD).

The protein resides in the cytoplasm. Functionally, RNA-binding protein that binds specific categories of mRNAs, including those that contain upstream open reading frames (uORFs) and internal ribosome entry sites (IRES). Probably involved in translational regulation. The chain is RNA-binding protein MRN1 (MRN1) from Saccharomyces cerevisiae (strain ATCC 204508 / S288c) (Baker's yeast).